The sequence spans 165 residues: Aspartate carbamoyltransferase regulatory chain (165 aa).

The Zn(2+) site is built by Cys-121, Cys-126, Cys-149, and Cys-152.

Belongs to the PyrI family. Contains catalytic and regulatory chains. Requires Zn(2+) as cofactor.

In terms of biological role, involved in allosteric regulation of aspartate carbamoyltransferase. The polypeptide is Aspartate carbamoyltransferase regulatory chain (Methanoregula boonei (strain DSM 21154 / JCM 14090 / 6A8)).